We begin with the raw amino-acid sequence, 449 residues long: UDP-N-acetylmuramoylalanine--D-glutamate ligase (449 aa).

116–122 (GSNGKST) contributes to the ATP binding site.

This sequence belongs to the MurCDEF family.

Its subcellular location is the cytoplasm. The enzyme catalyses UDP-N-acetyl-alpha-D-muramoyl-L-alanine + D-glutamate + ATP = UDP-N-acetyl-alpha-D-muramoyl-L-alanyl-D-glutamate + ADP + phosphate + H(+). Its pathway is cell wall biogenesis; peptidoglycan biosynthesis. Its function is as follows. Cell wall formation. Catalyzes the addition of glutamate to the nucleotide precursor UDP-N-acetylmuramoyl-L-alanine (UMA). In Shewanella violacea (strain JCM 10179 / CIP 106290 / LMG 19151 / DSS12), this protein is UDP-N-acetylmuramoylalanine--D-glutamate ligase.